A 329-amino-acid chain; its full sequence is MFRNHASRITAAAAPWVLRTACRQKSDAKTPVWGHTQLNRLSFLETVPVVPLRVSDESSEDRPTWSLPDIENVAITHKKPNGLVDTLAYRSVRTCRWLFDTFSLYRFGSITESKVISRCLFLETVAGVPGMVGGMLRHLSSLRYMTRDKGWINTLLVEAENERMHLMTFIELRQPGLPLRVSIIITQAIMYLFLLVAYVISPRFVHRFVGYLEEEAVITYTGVMRAIDEGRLRPTKNDVPEVARVYWNLSKNATFRDLINVIRADEAEHRVVNHTFADMHEKRLQNSVNPFVVLKKNPEEMYSNQPSGKTRTDFGSEGAKTASNVNKHV.

The helical transmembrane segment at 115–135 (VISRCLFLETVAGVPGMVGGM) threads the bilayer. Residues glutamate 123, glutamate 162, and histidine 165 each contribute to the Fe cation site. Residues 181-201 (VSIIITQAIMYLFLLVAYVIS) form a helical membrane-spanning segment. Residues glutamate 213, glutamate 266, and histidine 269 each contribute to the Fe cation site. Residues 300 to 329 (EMYSNQPSGKTRTDFGSEGAKTASNVNKHV) form a disordered region.

It belongs to the alternative oxidase family. In terms of assembly, homodimer; disulfide-linked. The cofactor is Fe cation.

It is found in the mitochondrion inner membrane. In terms of biological role, catalyzes cyanide-resistant oxygen consumption. May increase respiration when the cytochrome respiratory pathway is restricted, or in response to low temperatures. The protein is Alternative oxidase, mitochondrial (AOX) of Trypanosoma brucei brucei.